Consider the following 347-residue polypeptide: NADH-ubiquinone oxidoreductase chain 2 (347 aa).

10 consecutive transmembrane segments (helical) span residues methionine 1–methionine 21, histidine 25–methionine 45, tyrosine 59–isoleucine 79, isoleucine 96–proline 116, isoleucine 122–leucine 142, asparagine 150–leucine 170, alanine 201–leucine 221, threonine 242–proline 262, asparagine 274–methionine 294, and leucine 326–leucine 346.

The protein belongs to the complex I subunit 2 family. In terms of assembly, core subunit of respiratory chain NADH dehydrogenase (Complex I) which is composed of 45 different subunits. Interacts with TMEM242.

It localises to the mitochondrion inner membrane. The catalysed reaction is a ubiquinone + NADH + 5 H(+)(in) = a ubiquinol + NAD(+) + 4 H(+)(out). Its function is as follows. Core subunit of the mitochondrial membrane respiratory chain NADH dehydrogenase (Complex I) which catalyzes electron transfer from NADH through the respiratory chain, using ubiquinone as an electron acceptor. Essential for the catalytic activity and assembly of complex I. The chain is NADH-ubiquinone oxidoreductase chain 2 from Eidolon helvum (Straw-colored fruit bat).